The primary structure comprises 401 residues: Tryptophan synthase beta chain (401 aa).

An N6-(pyridoxal phosphate)lysine modification is found at Lys91.

This sequence belongs to the TrpB family. Tetramer of two alpha and two beta chains. Pyridoxal 5'-phosphate is required as a cofactor.

It catalyses the reaction (1S,2R)-1-C-(indol-3-yl)glycerol 3-phosphate + L-serine = D-glyceraldehyde 3-phosphate + L-tryptophan + H2O. It participates in amino-acid biosynthesis; L-tryptophan biosynthesis; L-tryptophan from chorismate: step 5/5. Functionally, the beta subunit is responsible for the synthesis of L-tryptophan from indole and L-serine. This Lactococcus lactis subsp. cremoris (strain SK11) protein is Tryptophan synthase beta chain.